The sequence spans 513 residues: Calcium-dependent protein kinase 2 (513 aa).

A lipid anchor (N-myristoyl glycine) is attached at Gly-2. One can recognise a Protein kinase domain in the interval 72–326 (YIIDEKLGQG…IEEALNHPWI (255 aa)). ATP is bound by residues 78 to 86 (LGQGTYGCV) and Lys-101. Asp-192 (proton acceptor) is an active-site residue. Positions 345 to 353 (NLKNFKKEN) match the J domain autoinhibitory motif motif. The j domain stretch occupies residues 345 to 380 (NLKNFKKENELKKIALTIIAKHLCDVEINNLRNIFI). Residues 354–363 (ELKKIALTII) carry the J domain EF-hand interaction motif motif. 4 EF-hand domains span residues 370 to 405 (VEINNLRNIFIALDVDNSGTLSSQEILDGLKKIGYQ), 406 to 441 (KIPPDIHQVLRDIDSNASGQIHYTDFLAATIDKQTY), 442 to 477 (LKKEVCLIPFKFFDIDGNGKISVEELKRIFGRDDIE), and 480 to 513 (LIDKAIDSLLQEVDLNGDGEIDFHEFMLMMSKKK). Residues Asp-383, Asp-385, Ser-387, Thr-389, and Glu-394 each coordinate Ca(2+). Ca(2+) is bound by residues Asp-455, Asp-457, Asn-459, Lys-461, Glu-466, Asp-493, Asn-495, Asp-497, Glu-499, and Glu-504.

This sequence belongs to the protein kinase superfamily. Ser/Thr protein kinase family. CDPK subfamily. In terms of assembly, monomer. Mg(2+) is required as a cofactor. Myristoylated; myristoylation may target it to different subcellular compartments. In terms of processing, autophosphorylated in vitro.

It catalyses the reaction L-seryl-[protein] + ATP = O-phospho-L-seryl-[protein] + ADP + H(+). The catalysed reaction is L-threonyl-[protein] + ATP = O-phospho-L-threonyl-[protein] + ADP + H(+). With respect to regulation, activated by calcium. Upon calcium binding to the EF-hand domains, the C-terminus of the junction domain (J domain) undergoes a conformational change which results in the dissociation of the pseudo-substrate inhibitory motif from the catalytic domain. This, in turn, may facilitate the autophosphorylation of the activation loop at Thr-232, which leads to the kinase activation. Its function is as follows. Calcium-dependent protein kinase which acts as a sensor and effector of intracellular Ca(2+) levels probably in part downstream of cGMP-activated PKG kinase. During male gametogenesis in the mosquito gut, required for male exflagellation, possibly by regulating male gamete exit from the host erythrocytes. Not required for asexual blood stage proliferation. The polypeptide is Calcium-dependent protein kinase 2 (Plasmodium falciparum (isolate K1 / Thailand)).